A 109-amino-acid chain; its full sequence is DNA-directed RNA polymerase subunit I (109 aa).

The catalysed reaction is RNA(n) + a ribonucleoside 5'-triphosphate = RNA(n+1) + diphosphate. Its function is as follows. DNA-dependent RNA polymerase catalyzes the transcription of DNA into RNA using the four ribonucleoside triphosphates as substrates. In Methanocaldococcus jannaschii (strain ATCC 43067 / DSM 2661 / JAL-1 / JCM 10045 / NBRC 100440) (Methanococcus jannaschii), this protein is DNA-directed RNA polymerase subunit I (rpoI).